Here is a 314-residue protein sequence, read N- to C-terminus: Methionyl-tRNA formyltransferase (314 aa).

113-116 (SLLP) is a binding site for (6S)-5,6,7,8-tetrahydrofolate.

This sequence belongs to the Fmt family.

It carries out the reaction L-methionyl-tRNA(fMet) + (6R)-10-formyltetrahydrofolate = N-formyl-L-methionyl-tRNA(fMet) + (6S)-5,6,7,8-tetrahydrofolate + H(+). Functionally, attaches a formyl group to the free amino group of methionyl-tRNA(fMet). The formyl group appears to play a dual role in the initiator identity of N-formylmethionyl-tRNA by promoting its recognition by IF2 and preventing the misappropriation of this tRNA by the elongation apparatus. This is Methionyl-tRNA formyltransferase from Pseudomonas aeruginosa (strain UCBPP-PA14).